Consider the following 703-residue polypeptide: Polyribonucleotide nucleotidyltransferase (703 aa).

Residues aspartate 485 and aspartate 491 each coordinate Mg(2+). The region spanning 552–611 (PRAYTINIDTDKIRTLIGTGGKTINKIIEETGVKIDIREDGTVFVLSSDADSANRALKMI) is the KH domain. Positions 621 to 689 (GEVYLGKVTK…NQGRVNLSRK (69 aa)) constitute an S1 motif domain.

This sequence belongs to the polyribonucleotide nucleotidyltransferase family. It depends on Mg(2+) as a cofactor.

It localises to the cytoplasm. It catalyses the reaction RNA(n+1) + phosphate = RNA(n) + a ribonucleoside 5'-diphosphate. Its function is as follows. Involved in mRNA degradation. Catalyzes the phosphorolysis of single-stranded polyribonucleotides processively in the 3'- to 5'-direction. This Clostridium acetobutylicum (strain ATCC 824 / DSM 792 / JCM 1419 / IAM 19013 / LMG 5710 / NBRC 13948 / NRRL B-527 / VKM B-1787 / 2291 / W) protein is Polyribonucleotide nucleotidyltransferase.